Reading from the N-terminus, the 248-residue chain is uncharacterized protein (248 aa).

Residues 1–26 (MVAPRISPKIVLVGFALFAIISASLA) form the signal peptide.

This is an uncharacterized protein from Acanthamoeba polyphaga mimivirus (APMV).